A 648-amino-acid polypeptide reads, in one-letter code: Protein KASH5 (648 aa).

The Cytoplasmic segment spans residues 1–606 (MHSILRSSLS…HSPGIRISQH (606 aa)). The tract at residues 206 to 228 (PEAEESANLESFGGEDPRPEGPA) is disordered. Positions 230–420 (AELLSNLEDL…EEQLSQSQEG (191 aa)) form a coiled coil. The span at 473–497 (EVEPEPEPEPEPEPEPEPQEVEFPS) shows a compositional bias: acidic residues. The tract at residues 473-545 (EVEPEPEPEP…EESWVLADPS (73 aa)) is disordered. Residues 607–627 (PLVPTPVLGLLLLLLLSILLF) form a helical; Anchor for type IV membrane protein membrane-spanning segment. Residues 628–648 (SQSPPPTWPHLQLYYLQPPPV) are Perinuclear space-facing.

Core component the LINC complex which is composed of inner nuclear membrane SUN domain-containing proteins coupled to outer nuclear membrane KASH domain-containing nesprins. SUN and KASH domain-containing proteins seem to bind each other promiscuously; however, differentially expression of LINC complex constituents is giving rise to specific assemblies. At least SUN1/2-containing core LINC complexes are proposed to be hexameric composed of three protomers of each KASH and SUN domain-containing protein. Interacts with SUN1; this interaction mediates its telomere localization by forming a SUN1:KASH5 LINC complex. Component of a probable SUN2:KASH5 LINC complex. Self-associates. Interacts with DYNC1H1, DCTN1, DYNC1I1/2 and PAFAH1B1; suggesting the association with the dynein-dynactin motor complex. Restricted to the testis and the early ootidogenesis ovary. Expressed in spermatocytes and oocytes (at protein level).

The protein resides in the nucleus outer membrane. It is found in the nucleus. It localises to the chromosome. Its subcellular location is the telomere. The protein localises to the nucleus envelope. In terms of biological role, as a component of the LINC (LInker of Nucleoskeleton and Cytoskeleton) complex, involved in the connection between the nuclear lamina and the cytoskeleton. The nucleocytoplasmic interactions established by the LINC complex play an important role in the transmission of mechanical forces across the nuclear envelope and in nuclear movement and positioning. Required for telomere attachment to nuclear envelope in the prophase of meiosis and for rapid telomere prophase movements implicating a SUN1/2:KASH5 LINC complex in which SUN1 and SUN2 seem to act at least partial redundantly. Required for homolog pairing during meiotic prophase in spermatocytes and probably oocytes. Essential for male and female gametogenesis. Recruits cytoplasmic dynein to telomere attachment sites at the nuclear envelope in spermatocytes. In oocytes is involved in meiotic resumption and spindle formation. The chain is Protein KASH5 from Mus musculus (Mouse).